Consider the following 192-residue polypeptide: 7-methyl-GTP pyrophosphatase (192 aa).

Asp69 acts as the Proton acceptor in catalysis.

Belongs to the Maf family. YceF subfamily. Requires a divalent metal cation as cofactor.

It is found in the cytoplasm. The enzyme catalyses N(7)-methyl-GTP + H2O = N(7)-methyl-GMP + diphosphate + H(+). Nucleoside triphosphate pyrophosphatase that hydrolyzes 7-methyl-GTP (m(7)GTP). May have a dual role in cell division arrest and in preventing the incorporation of modified nucleotides into cellular nucleic acids. This Pseudomonas savastanoi pv. phaseolicola (strain 1448A / Race 6) (Pseudomonas syringae pv. phaseolicola (strain 1448A / Race 6)) protein is 7-methyl-GTP pyrophosphatase.